A 981-amino-acid chain; its full sequence is Beta-glucuronidase (981 aa).

Residue E500 is the Nucleophile of the active site. The Mg(2+) site is built by N561, W562, I563, S581, and E583.

Belongs to the glycosyl hydrolase 2 family.

The protein resides in the periplasm. It catalyses the reaction a beta-D-glucuronoside + H2O = D-glucuronate + an alcohol. In terms of biological role, beta-glucuronidase involved in ulvan degradation. Ulvan is the main polysaccharide component of the Ulvales (green seaweed) cell wall. It is composed of disaccharide building blocks comprising 3-sulfated rhamnose (Rha3S) linked to D-glucuronic acid (GlcA), L-iduronic acid (IduA), or D-xylose (Xyl). Beta-glucuronidase removes GlcA side chains present on some O2 residues of Rha3S. Can remove the GlcA side chains from polymeric ulvan or from smaller oligomers. This is Beta-glucuronidase from Formosa agariphila (strain DSM 15362 / KCTC 12365 / LMG 23005 / KMM 3901 / M-2Alg 35-1).